Here is a 149-residue protein sequence, read N- to C-terminus: Ribonuclease pancreatic (149 aa).

Positions 1-25 (MGLEKSLMLFPLFVLLLGWVQPSLG) are cleaved as a signal peptide. Residues 30–49 (AQKFQRQHMDPAGSSSNSPT) form a disordered region. Residues lysine 32 and arginine 35 each coordinate substrate. Histidine 37 (proton acceptor) is an active-site residue. 4 cysteine pairs are disulfide-bonded: cysteine 51-cysteine 109, cysteine 65-cysteine 120, cysteine 83-cysteine 135, and cysteine 90-cysteine 97. Residue 66 to 70 (KPVNT) participates in substrate binding. Asparagine 87 carries an N-linked (GlcNAc...) asparagine glycan. Lysine 91 is a substrate binding site. Catalysis depends on histidine 144, which acts as the Proton donor.

It belongs to the pancreatic ribonuclease family. As to quaternary structure, monomer. Interacts with and forms tight 1:1 complexes with RNH1. Dimerization of two such complexes may occur. Interaction with RNH1 inhibits this protein. In terms of tissue distribution, pancreas.

It localises to the secreted. It catalyses the reaction an [RNA] containing cytidine + H2O = an [RNA]-3'-cytidine-3'-phosphate + a 5'-hydroxy-ribonucleotide-3'-[RNA].. The enzyme catalyses an [RNA] containing uridine + H2O = an [RNA]-3'-uridine-3'-phosphate + a 5'-hydroxy-ribonucleotide-3'-[RNA].. In terms of biological role, endonuclease that catalyzes the cleavage of RNA on the 3' side of pyrimidine nucleotides. Acts on single-stranded and double-stranded RNA. The polypeptide is Ribonuclease pancreatic (Rnase1) (Mus saxicola (Brown spiny mouse)).